The chain runs to 357 residues: MSITIQNLNKHFGNFHALKNINLNVPTGKLVSLLGPSGCGKTTLLRIIAGLENADGGNILFDGQDVTAKHVRERKVGFVFQHYALFRHMNVFDNVAFGLTVLPKSERPSKGQIRAKVEELLKLVQLSHLAKSYPHQLSGGQRQRIALARALAVEPKLLLLDEPFGALDAKVRKELRTWLRDIHHNLGVTSILVTHDQEEALEVSDEIVVMNHGKIEQTGSAEAIYRKPENAFVTEFLGETDAFEGRIEKGFWHYNGFAWKLDAQYKWQEQTATGYIRPHEWQIAAEHETPMICAEIEKIHAVGALTHILVKHDKQDVHITLAGSDAARYPIAEGKELKLIPKQVYVFSQNELIEYSI.

The 235-residue stretch at Ile3 to Leu237 folds into the ABC transporter domain. Gly35 to Thr42 contacts ATP.

The protein belongs to the ABC transporter superfamily. Sulfate/tungstate importer (TC 3.A.1.6) family. As to quaternary structure, the complex is composed of two ATP-binding proteins (CysA), two transmembrane proteins (CysT and CysW) and a solute-binding protein (CysP).

The protein localises to the cell inner membrane. It carries out the reaction sulfate(out) + ATP + H2O = sulfate(in) + ADP + phosphate + H(+). The catalysed reaction is thiosulfate(out) + ATP + H2O = thiosulfate(in) + ADP + phosphate + H(+). Part of the ABC transporter complex CysAWTP involved in sulfate/thiosulfate import. Responsible for energy coupling to the transport system. This Neisseria meningitidis serogroup B (strain ATCC BAA-335 / MC58) protein is Sulfate/thiosulfate import ATP-binding protein CysA.